The primary structure comprises 62 residues: UPF0434 protein NGR_c31900 (62 aa).

Belongs to the UPF0434 family.

The protein is UPF0434 protein NGR_c31900 of Sinorhizobium fredii (strain NBRC 101917 / NGR234).